A 444-amino-acid chain; its full sequence is Argininosuccinate synthase (444 aa).

ATP contacts are provided by residues 18–26 (AFSGGLDTS) and A44. L-citrulline is bound at residue Y100. The ATP site is built by G130 and T132. T132, N136, and D137 together coordinate L-aspartate. N136 is an L-citrulline binding site. D137 serves as a coordination point for ATP. L-citrulline is bound by residues R140 and S193. ATP is bound at residue D195. L-citrulline is bound by residues T202, E204, and E281.

The protein belongs to the argininosuccinate synthase family. Type 2 subfamily. In terms of assembly, homotetramer.

Its subcellular location is the cytoplasm. It carries out the reaction L-citrulline + L-aspartate + ATP = 2-(N(omega)-L-arginino)succinate + AMP + diphosphate + H(+). Its pathway is amino-acid biosynthesis; L-arginine biosynthesis; L-arginine from L-ornithine and carbamoyl phosphate: step 2/3. In Mannheimia succiniciproducens (strain KCTC 0769BP / MBEL55E), this protein is Argininosuccinate synthase.